The primary structure comprises 292 residues: Nitrogenase iron protein 2 (292 aa).

Residue 12 to 19 coordinates ATP; that stretch reads GKGGIGKS. C97 serves as a coordination point for [4Fe-4S] cluster. Residue R100 is modified to ADP-ribosylarginine; by dinitrogenase reductase ADP-ribosyltransferase. C133 lines the [4Fe-4S] cluster pocket.

The protein belongs to the NifH/BchL/ChlL family. Homodimer. [4Fe-4S] cluster is required as a cofactor. In terms of processing, the reversible ADP-ribosylation of Arg-100 inactivates the nitrogenase reductase and regulates nitrogenase activity.

It carries out the reaction N2 + 8 reduced [2Fe-2S]-[ferredoxin] + 16 ATP + 16 H2O = H2 + 8 oxidized [2Fe-2S]-[ferredoxin] + 2 NH4(+) + 16 ADP + 16 phosphate + 6 H(+). In terms of biological role, the key enzymatic reactions in nitrogen fixation are catalyzed by the nitrogenase complex, which has 2 components: the iron protein and the molybdenum-iron protein. The chain is Nitrogenase iron protein 2 (nifH2) from Paenibacillus durus (Paenibacillus azotofixans).